We begin with the raw amino-acid sequence, 444 residues long: Presenilin sel-12 (444 aa).

The Cytoplasmic segment spans residues 1–45; it reads MPSTRRQQEGGGADAETHTVYGTNLITNRNSQEDENVVEEAELKY. A helical transmembrane segment spans residues 46 to 66; sequence GASHVIHLFVPVSLCMALVVF. Over 67-101 the chain is Lumenal; sequence TMNTITFYSQNNGRHLLYTPFVRETDSIVEKGLMS. Residues 102–122 form a helical membrane-spanning segment; sequence LGNALVMLCVVVLMTVLLIVF. At 123–130 the chain is on the cytoplasmic side; that stretch reads YKYKFYKL. Residues 131-151 traverse the membrane as a helical segment; the sequence is IHGWLIVSSFLLLFLFTTIYV. Topologically, residues 152 to 163 are lumenal; it reads QEVLKSFDVSPS. Residues 164 to 184 form a helical membrane-spanning segment; sequence ALLVLFGLGNYGVLGMMCIHW. Residues 185-189 are Cytoplasmic-facing; it reads KGPLR. A helical transmembrane segment spans residues 190–210; that stretch reads LQQFYLITMSALMALVFIKYL. Topologically, residues 211-212 are lumenal; the sequence is PE. The chain crosses the membrane as a helical span at residues 213–233; the sequence is WTVWFVLFVISVWDLVAVLTP. Asp226 is a catalytic residue. The Cytoplasmic segment spans residues 234–359; sequence KGPLRYLVET…RHEEEERGVK (126 aa). The disordered stretch occupies residues 275-331; that stretch reads TDPREPTSSDSNTSTAFPGEASCSSETPKRPKVKRIPQKVQIESNTTASTTQNSGVR. Composition is skewed to polar residues over residues 282 to 300 and 315 to 329; these read SSDSNTSTAFPGEASCSSE and QIESNTTASTTQNSG. The helical transmembrane segment at 360–380 threads the bilayer; it reads LGLGDFIFYSVLLGKASSYFD. Asp364 is an active-site residue. At 381 to 384 the chain is on the lumenal side; that stretch reads WNTT. A helical membrane pass occupies residues 385-405; that stretch reads IACYVAILIGLCFTLVLLAVF. Topologically, residues 406 to 413 are cytoplasmic; it reads KRALPALP. Positions 410–412 match the PAL motif; that stretch reads PAL. The segment at residues 414–434 is an intramembrane region (helical); that stretch reads ISIFSGLIFYFCTRWIITPFV. Topologically, residues 435-444 are cytoplasmic; that stretch reads TQVSQKCLLY.

This sequence belongs to the peptidase A22A family. As to quaternary structure, homodimer. Component of the gamma-secretase complex, a complex probably composed of the presenilin homodimer (sel-12, hop-1 or spe-4), nicastrin (aph-2), aph-1 and pen-2. Interacts with sel-10. In terms of tissue distribution, expressed in most neurons.

It is found in the endoplasmic reticulum membrane. The protein localises to the golgi apparatus membrane. Its function is as follows. Probable catalytic subunit of the gamma-secretase complex, an endoprotease complex that catalyzes the intramembrane cleavage of integral membrane proteins such as Notch receptors (lin-12 or glp-1). Provides the major presenilin function compared to hop-1 and spe-4. Required cell-autonomously for correct neurite connectivity of the AIY cholinergic interneurons and their correct functioning in thermotaxis. Required for mesodermal patterning of muscle function. Promotes basement membrane gap formation during tissue remodeling. This is Presenilin sel-12 from Caenorhabditis elegans.